The chain runs to 342 residues: L-threonine 3-dehydrogenase (342 aa).

Residue Cys38 participates in Zn(2+) binding. Active-site charge relay system residues include Thr40 and His43. Zn(2+)-binding residues include His63, Glu64, Cys93, Cys96, Cys99, and Cys107. NAD(+) contacts are provided by residues Ile175, Asp195, Arg200, 262-264 (LGI), and 286-287 (IY).

This sequence belongs to the zinc-containing alcohol dehydrogenase family. Homotetramer. Zn(2+) is required as a cofactor.

The protein resides in the cytoplasm. The enzyme catalyses L-threonine + NAD(+) = (2S)-2-amino-3-oxobutanoate + NADH + H(+). It functions in the pathway amino-acid degradation; L-threonine degradation via oxydo-reductase pathway; glycine from L-threonine: step 1/2. Functionally, catalyzes the NAD(+)-dependent oxidation of L-threonine to 2-amino-3-ketobutyrate. The chain is L-threonine 3-dehydrogenase from Aeromonas salmonicida (strain A449).